A 341-amino-acid polypeptide reads, in one-letter code: MFAKVAFKNFTPLKSIAPRSFSTTSSRAFKVAVLGAGGGIGQPLSMLLKLNDKVSELALFDIRGAPGVAADIGHINTTSNVVGYAPDDKGLEKALNGADVVIIPAGVPRKPGMTRDDLFATNASIVRDLAFAAGETCPEAKYLVVTNPVNSTVPIFKKALERVGVHQPKHLFGVTTLDSVRASRFTSQVTNGKAELLHIPVVGGHSGATIVPLLSQGGVELTGEKRDALIHRIQFGGDEVVKAKAGAGSATLSMAYAGARMASSVLRALAGESGVEECTFVESPLYKDQGIDFFASRVTLGKDGVDTIHPVGKINDYEESLLKVALGELKKSITKGEQFVA.

NAD(+)-binding positions include 35–41 (GAGGGIG) and Asp61. Arg109 and Arg115 together coordinate substrate. Position 122 (Asn122) interacts with NAD(+). 2 residues coordinate substrate: Asn147 and Arg181. Residue His205 is the Proton acceptor of the active site. Residue Met254 participates in NAD(+) binding.

It belongs to the LDH/MDH superfamily. MDH type 1 family. Homodimer.

It localises to the mitochondrion matrix. The catalysed reaction is (S)-malate + NAD(+) = oxaloacetate + NADH + H(+). This chain is Malate dehydrogenase, mitochondrial (MDH1), found in Schizosaccharomyces pombe (strain 972 / ATCC 24843) (Fission yeast).